The following is a 979-amino-acid chain: Glutamate receptor ionotropic, kainate 5 (979 aa).

An N-terminal signal peptide occupies residues 1-14 (MPAELLLLLIVAFA). Residues 15–544 (NPSCQVLSSL…YFSFLDPFSP (530 aa)) are Extracellular-facing. 3 disulfides stabilise this stretch: C36-C292, C83-C334, and C165-C170. Residues N219, N271, N285, N322, N372, N394, N400, N407, N414, and N478 are each glycosylated (N-linked (GlcNAc...) asparagine). Residues 545–565 (AVWLFMLLAYLAVSCVLFLAA) form a helical membrane-spanning segment. Residues 566–622 (RLSPYEWYNPHPCLRARPHILENQYTLGNSLWFPVGGFMQQGSEIMPRALSTRCVSG) lie on the Cytoplasmic side of the membrane. Residues 623 to 643 (VWWAFTLIIISSYTANLAAFL) form a helical membrane-spanning segment. At 644-803 (TVQRMEVPVE…HRAKGLGMEN (160 aa)) the chain is on the extracellular side. N-linked (GlcNAc...) asparagine glycosylation occurs at N735. Residues 804–824 (IGGIFVVLICGLIIAVFVAVM) traverse the membrane as a helical segment. The Cytoplasmic segment spans residues 825 to 979 (EFIWSTRRSA…TGPRELTEHE (155 aa)). Positions 856–867 (RKTSRSRRRRRP) are enriched in basic residues. Disordered stretches follow at residues 856–875 (RKTSRSRRRRRPGGPSRALL), 890–925 (LYSAGAGGDAGAHGGPQRLLDDPGPPGGPRPQAPTP), and 942–979 (RASGAGAPPRGLGTPAEATSPPRPRPGPTGPRELTEHE). Gly residues predominate over residues 894-903 (GAGGDAGAHG). Over residues 912–923 (PGPPGGPRPQAP) the composition is skewed to pro residues.

The protein belongs to the glutamate-gated ion channel (TC 1.A.10.1) family. GRIK5 subfamily. As to quaternary structure, homotetramer. Heterotetramer with GRIK2. Can form functional heteromeric receptors with GRIK1, GRIK2 and GRIK3. Forms a heteromeric complex with GRIK2. Expressed in the hippocampal mossy fiber synapses (at protein level).

Its subcellular location is the cell membrane. It is found in the postsynaptic cell membrane. It localises to the presynaptic cell membrane. Its function is as follows. Ionotropic glutamate receptor that functions as a cation-permeable ligand-gated ion channel, gated by L-glutamate and the glutamatergic agonist kainic acid. Cannot form functional channels on its own and produces channel activity only in heteromeric assembly with GRIK2 subunit. Can form functional heteromeric receptors with GRIK1 and GRIK3. The sequence is that of Glutamate receptor ionotropic, kainate 5 (Grik5) from Mus musculus (Mouse).